The following is a 165-amino-acid chain: Shikimate kinase (165 aa).

12–17 (GCGKST) is an ATP binding site. A Mg(2+)-binding site is contributed by serine 16. Substrate-binding residues include aspartate 34, arginine 57, and glycine 79. Position 116 (arginine 116) interacts with ATP. A substrate-binding site is contributed by arginine 133.

The protein belongs to the shikimate kinase family. As to quaternary structure, monomer. The cofactor is Mg(2+).

It is found in the cytoplasm. It carries out the reaction shikimate + ATP = 3-phosphoshikimate + ADP + H(+). The protein operates within metabolic intermediate biosynthesis; chorismate biosynthesis; chorismate from D-erythrose 4-phosphate and phosphoenolpyruvate: step 5/7. Its function is as follows. Catalyzes the specific phosphorylation of the 3-hydroxyl group of shikimic acid using ATP as a cosubstrate. The polypeptide is Shikimate kinase (Clostridium botulinum (strain Eklund 17B / Type B)).